Here is a 250-residue protein sequence, read N- to C-terminus: Probable transcriptional regulatory protein Paes_0496 (250 aa).

Belongs to the TACO1 family.

The protein localises to the cytoplasm. The protein is Probable transcriptional regulatory protein Paes_0496 of Prosthecochloris aestuarii (strain DSM 271 / SK 413).